The primary structure comprises 633 residues: Keratin, type II cytoskeletal 2 epidermal (633 aa).

Residues 1–189 (MSCQISCKSR…DPEIQNVKSQ (189 aa)) are head. Arg-18 is modified (asymmetric dimethylarginine). A phosphoserine mark is found at Ser-21, Ser-24, and Ser-60. Residues 190–225 (EREQIKTLNNKFASFIDKVRFLEQQNQVLQTKWELL) form a coil 1A region. The IF rod domain occupies 190-503 (EREQIKTLNN…KLLEGEECRM (314 aa)). The tract at residues 226-244 (QQLDVSTRTTNLEPIFQAY) is linker 1. Residues 245–336 (IAKLKKYVDT…FLFDXELSQM (92 aa)) are coil 1B. The tract at residues 337–360 (QTQISETNVTLSMDNNRSLDLDSI) is linker 12. Positions 361 to 499 (ISEVKAQYEE…ATYRKLLEGE (139 aa)) are coil 2. Positions 500–633 (ECRMSGDLSS…SGSSVTFSFR (134 aa)) are tail. A compositionally biased stretch (low complexity) spans 518-527 (SSMSSSMTSR). The interval 518-633 (SSMSSSMTSR…SGSSVTFSFR (116 aa)) is disordered. A compositionally biased stretch (gly residues) spans 528 to 613 (GGFGGYGSGG…GYGSGGGSRG (86 aa)). An omega-N-methylarginine mark is found at Arg-588 and Arg-612.

The protein belongs to the intermediate filament family. In terms of assembly, heterotetramer of two type I and two type II keratins. Associates with KRT10.

The protein localises to the cytoplasm. Its function is as follows. Probably contributes to terminal cornification. Associated with keratinocyte activation, proliferation and keratinization. Required for maintenance of corneocytes and keratin filaments in suprabasal keratinocytes in the epidermis of the ear, potentially via moderation of expression and localization of keratins and their partner proteins. Plays a role in the establishment of the epidermal barrier on plantar skin. The protein is Keratin, type II cytoskeletal 2 epidermal (KRT2) of Canis lupus familiaris (Dog).